A 151-amino-acid polypeptide reads, in one-letter code: MGRMHAPGKGLSQSALPYRRSVPTWLKLTSDDVKEQIYKLAKKGLTPSQIGVILRDSHGVAQVRFVTGNKILRILKSKGLAPDLPEDLYHLIKKAVAVRKHLERNRKDKDAKFRLILIESRIHRLARYYKTKRVLPPNWKYESSTASALVA.

Lys27 is modified (N6-acetyllysine; alternate). At Lys27 the chain carries N6-succinyllysine; alternate. A Glycyl lysine isopeptide (Lys-Gly) (interchain with G-Cter in ubiquitin) cross-link involves residue Lys27. Ser30 is modified (phosphoserine). At Lys34 the chain carries N6-succinyllysine. Tyr38 carries the post-translational modification Phosphotyrosine. Residue Lys43 forms a Glycyl lysine isopeptide (Lys-Gly) (interchain with G-Cter in SUMO2) linkage.

The protein belongs to the universal ribosomal protein uS15 family. In terms of assembly, component of the small ribosomal subunit. Part of the small subunit (SSU) processome, composed of more than 70 proteins and the RNA chaperone small nucleolar RNA (snoRNA) U3. Ubiquitinated at Lys-27 by RNF14 and RNF25 in response to ribosome collisions (ribosome stalling).

The protein resides in the cytoplasm. The protein localises to the nucleus. It localises to the nucleolus. In terms of biological role, component of the small ribosomal subunit. The ribosome is a large ribonucleoprotein complex responsible for the synthesis of proteins in the cell. Part of the small subunit (SSU) processome, first precursor of the small eukaryotic ribosomal subunit. During the assembly of the SSU processome in the nucleolus, many ribosome biogenesis factors, an RNA chaperone and ribosomal proteins associate with the nascent pre-rRNA and work in concert to generate RNA folding, modifications, rearrangements and cleavage as well as targeted degradation of pre-ribosomal RNA by the RNA exosome. This is Small ribosomal subunit protein uS15 from Homo sapiens (Human).